Here is a 424-residue protein sequence, read N- to C-terminus: Trigger factor (424 aa).

Positions 163–248 constitute a PPIase FKBP-type domain; it reads GDTVVLDFEG…IHEIKAKELP (86 aa).

Belongs to the FKBP-type PPIase family. Tig subfamily.

Its subcellular location is the cytoplasm. The enzyme catalyses [protein]-peptidylproline (omega=180) = [protein]-peptidylproline (omega=0). Involved in protein export. Acts as a chaperone by maintaining the newly synthesized protein in an open conformation. Functions as a peptidyl-prolyl cis-trans isomerase. The chain is Trigger factor from Bacillus pumilus (strain SAFR-032).